The chain runs to 161 residues: Nucleotide-binding protein lpl1175 (161 aa).

Belongs to the YajQ family.

Nucleotide-binding protein. This Legionella pneumophila (strain Lens) protein is Nucleotide-binding protein lpl1175.